The following is a 1828-amino-acid chain: AT-rich interactive domain-containing protein 2 (1828 aa).

Position 2 is an N-acetylalanine (alanine 2). Residue serine 4 is modified to Phosphoserine. Residues lysine 7, lysine 15, and lysine 119 each participate in a glycyl lysine isopeptide (Lys-Gly) (interchain with G-Cter in SUMO2) cross-link. The ARID domain occupies arginine 13–histidine 105. The LXXLL signature appears at leucine 313 to leucine 317. Positions alanine 524–alanine 603 form a DNA-binding region, RFX-type winged-helix. Lysine 555 is covalently cross-linked (Glycyl lysine isopeptide (Lys-Gly) (interchain with G-Cter in SUMO2)). Phosphoserine is present on residues serine 631 and serine 635. A Phosphothreonine modification is found at threonine 653. Phosphoserine is present on serine 689. Phosphothreonine is present on threonine 692. Disordered stretches follow at residues threonine 824–glutamine 843, leucine 962–valine 1028, lysine 1245–aspartate 1339, lysine 1360–valine 1462, histidine 1483–threonine 1503, and serine 1566–proline 1618. Polar residues predominate over residues alanine 987–arginine 1011. Over residues glutamine 1012–valine 1028 the composition is skewed to low complexity. The span at lysine 1245–valine 1259 shows a compositional bias: basic and acidic residues. A compositionally biased stretch (polar residues) spans arginine 1267–glutamine 1283. A Phosphoserine modification is found at serine 1294. Polar residues-rich tracts occupy residues aspartate 1295–proline 1320 and leucine 1366–valine 1379. Position 1385 is a phosphoserine (serine 1385). 2 stretches are compositionally biased toward polar residues: residues glutamine 1390–threonine 1400 and glycine 1419–glutamate 1428. Low complexity predominate over residues serine 1453–valine 1462. Serine 1491 is subject to Phosphoserine. Polar residues-rich tracts occupy residues serine 1491–threonine 1503 and alanine 1567–asparagine 1586. Residues alanine 1594–glutamine 1614 show a composition bias toward low complexity. Residues phenylalanine 1626–histidine 1651 form a C2H2-type zinc finger. Glycyl lysine isopeptide (Lys-Gly) (interchain with G-Cter in SUMO2) cross-links involve residues lysine 1695, lysine 1710, and lysine 1725. The tract at residues aspartate 1697–alanine 1726 is disordered. Over residues valine 1702 to valine 1714 the composition is skewed to polar residues.

It belongs to the RFX family. In terms of assembly, component of the SWI/SNF-B (PBAF) chromatin remodeling complex, at least composed of SMARCA4/BRG1, SMARCB1/BAF47/SNF5, ACTL6A/BAF53A or ACTL6B/BAF53B, SMARCE1/BAF57, SMARCD1/BAF60A, SMARCD2/BAF60B, perhaps SMARCD3/BAF60C, SMARCC1/BAF155, SMARCC2/BAF170, PBRM1/BAF180, ARID2/BAF200 and actin. Interacts with SRF. Forms complexes with SRF and SRF cofactors MYOCD, NKX2-5 and SRFBP1. As to expression, highly expressed in testis, expressed in heart, liver and kidney.

The protein localises to the nucleus. In terms of biological role, involved in transcriptional activation and repression of select genes by chromatin remodeling (alteration of DNA-nucleosome topology). Required for the stability of the SWI/SNF chromatin remodeling complex SWI/SNF-B (PBAF). May be involved in targeting the complex to different genes. May be involved in regulating transcriptional activation of cardiac genes. The sequence is that of AT-rich interactive domain-containing protein 2 from Mus musculus (Mouse).